Here is a 346-residue protein sequence, read N- to C-terminus: Ribosomal RNA small subunit methyltransferase H (346 aa).

Residues 53-55 (GGY), D70, F97, D114, and Q121 contribute to the S-adenosyl-L-methionine site.

It belongs to the methyltransferase superfamily. RsmH family.

The protein resides in the cytoplasm. It catalyses the reaction cytidine(1402) in 16S rRNA + S-adenosyl-L-methionine = N(4)-methylcytidine(1402) in 16S rRNA + S-adenosyl-L-homocysteine + H(+). In terms of biological role, specifically methylates the N4 position of cytidine in position 1402 (C1402) of 16S rRNA. The polypeptide is Ribosomal RNA small subunit methyltransferase H (Bartonella henselae (strain ATCC 49882 / DSM 28221 / CCUG 30454 / Houston 1) (Rochalimaea henselae)).